A 305-amino-acid polypeptide reads, in one-letter code: MIDLTLLGCGGNVPMPNRFLSSVFINYKGRKILIDCGEGTQVSMKLKKCGFKDIDLICITHLHGDHIFGLLGLLSTIGNSGRTSDLTIVGPVGIVDCIRSMRNLVEYVPYTLKIIENPQGNFSLDNKVLRNLEISTISLEHSIECLGYSFNFRRNPKFDIDKATKNEVPKILWNKLQEGQNIVLDSKQYTPDMVLGELRKGVKISLTTDTRPIESIPDFIKDSDLFICEAMYGDDLDISKAVRNKHMTFREAANLAKLGNVKQLLLTHFSPSLDIPSMYLENATNVFENTILGEDRLSLRLNFDE.

Residues histidine 61, histidine 63, aspartate 65, histidine 66, histidine 141, aspartate 209, and histidine 268 each coordinate Zn(2+). Residue aspartate 65 is the Proton acceptor of the active site.

This sequence belongs to the RNase Z family. As to quaternary structure, homodimer. It depends on Zn(2+) as a cofactor.

It catalyses the reaction Endonucleolytic cleavage of RNA, removing extra 3' nucleotides from tRNA precursor, generating 3' termini of tRNAs. A 3'-hydroxy group is left at the tRNA terminus and a 5'-phosphoryl group is left at the trailer molecule.. Its function is as follows. Zinc phosphodiesterase, which displays some tRNA 3'-processing endonuclease activity. Probably involved in tRNA maturation, by removing a 3'-trailer from precursor tRNA. The sequence is that of Ribonuclease Z from Clostridioides difficile (strain 630) (Peptoclostridium difficile).